Here is a 425-residue protein sequence, read N- to C-terminus: Diacetylchitobiose binding protein DasA (425 aa).

An N-terminal signal peptide occupies residues 1-20; sequence MKRKLIAAIGIAGMMVSIAA. Residue Cys-21 is the site of N-palmitoyl cysteine attachment. Cys-21 carries the S-diacylglycerol cysteine lipid modification.

This sequence belongs to the bacterial solute-binding protein 1 family. As to quaternary structure, the complex is composed of two ATP-binding proteins (MsiK), two transmembrane proteins (DasB and DasC) and a solute-binding protein (DasA).

The protein localises to the cell membrane. Functionally, part of the ABC transporter complex DasABC-MsiK involved in N,N'-diacetylchitobiose ((GlcNAc)2) uptake. Binds specifically to (GlcNAc)2. Can also bind to GlcNAc, (GlcNAc)3, (GlcNAc)4 and (GlcNAc)5, but it exhibits the highest affinity for (GlcNAc)2. Involved in the control of morphological differentiation. This chain is Diacetylchitobiose binding protein DasA, found in Streptomyces coelicolor (strain ATCC BAA-471 / A3(2) / M145).